The primary structure comprises 2084 residues: MAP kinase-activating death domain protein (2084 aa).

A uDENN domain is found at 25–352 (TPPMPKGLQG…VPVPGSTRVE (328 aa)). Residues 117-253 (PSSAAGSAGA…SPRASRKRTK (137 aa)) form a disordered region. Residues 118 to 131 (SSAAGSAGAGNDRP) are compositionally biased toward low complexity. The span at 132-152 (GNGGPGGHGGGAGGGAGGGGR) shows a compositional bias: gly residues. Over residues 160–173 (FRRESWRKSMERSS) the composition is skewed to basic and acidic residues. Residues 174–183 (DSAFSSDYRS) are compositionally biased toward low complexity. The segment covering 189–204 (DSDRELTSRRDSDQQR) has biased composition (basic and acidic residues). Basic residues predominate over residues 205-215 (LHSHHSHHQPH). The segment covering 234-245 (DSESGGSHSPSP) has biased composition (polar residues). The region spanning 373–514 (RFSLVDFPLH…EGTILKNHLK (142 aa)) is the cDENN domain. One can recognise a dDENN domain in the interval 516-678 (ALTSMTATNT…EWSLTPTNVA (163 aa)). Disordered regions lie at residues 557–588 (TPPHSAQASQRNSMSAQGTISSRQPSPMNSPA), 730–749 (QPTDESGSDSEGADSSSSSY), 811–863 (VASK…TVGS), 891–963 (QESD…SQSS), 1058–1092 (HSAGGAGPPPKSPGSQLATHKQVQQSGGQGGGNNF), 1115–1188 (FGKK…AENQ), and 1305–1382 (SSSL…GQST). A compositionally biased stretch (polar residues) spans 558–588 (PPHSAQASQRNSMSAQGTISSRQPSPMNSPA). Low complexity predominate over residues 824–839 (SPVSSSSSRSDLSSPS). Basic and acidic residues predominate over residues 913–925 (HPSDSESRPEKKI). The span at 946–963 (GSSGSSSSSPGRQSSQSS) shows a compositional bias: low complexity. Low complexity predominate over residues 1121–1131 (QKQVPVQQKQP). The segment covering 1168–1183 (TQEELTRQQNQERSHS) has biased composition (basic and acidic residues). Residues 1305–1315 (SSSLLSSHAAS) are compositionally biased toward low complexity. 2 stretches are compositionally biased toward polar residues: residues 1324–1353 (RSPSSPNGSHSALGSEWASPQESRKSSTQL) and 1370–1382 (RLSSADSQDGQST). One can recognise a Death domain in the interval 1490-1565 (GMDQGPIEMM…GLVYSQEVHN (76 aa)). The span at 1794-1842 (DIHAQQKQKHQQQQQHQQPQQQQQPHQTTTQQNQPTAVASAVPTTTAPA) shows a compositional bias: low complexity. 2 disordered regions span residues 1794–1865 (DIHA…RHTV) and 1896–2084 (VPVP…HRKH). Polar residues predominate over residues 1845-1858 (VNPNRMTAKSQAGS). Positions 1896 to 1907 (VPVPPTPAPPTS) are enriched in pro residues. Positions 1921–1932 (SQPSTESLASIS) are enriched in polar residues. Composition is skewed to pro residues over residues 1933 to 1953 (SPPPKLRTPMSAPPGPPPAIP) and 1983 to 1993 (QYTPQPPPPFV). 2 stretches are compositionally biased toward low complexity: residues 2001–2029 (LARASTLSSSTSPSMSSSSASNHPGHSQS) and 2059–2077 (ISGSSSGSGSASGSIASAS).

Belongs to the MADD family.

It is found in the cell membrane. The protein resides in the cytoplasm. Functionally, guanyl-nucleotide exchange factor that regulates small GTPases. Converts GDP-bound inactive form of Rab3 to the GTP-bound active forms. The protein is MAP kinase-activating death domain protein of Drosophila melanogaster (Fruit fly).